The chain runs to 309 residues: Probable pyridoxal 5'-phosphate synthase subunit PDX1 (309 aa).

D-ribose 5-phosphate is bound at residue Asp-40. Lys-97 serves as the catalytic Schiff-base intermediate with D-ribose 5-phosphate. Position 169 (Gly-169) interacts with D-ribose 5-phosphate. Residue Arg-181 participates in D-glyceraldehyde 3-phosphate binding. Residues Gly-230 and 251–252 (GS) each bind D-ribose 5-phosphate.

Belongs to the PdxS/SNZ family.

It carries out the reaction aldehydo-D-ribose 5-phosphate + D-glyceraldehyde 3-phosphate + L-glutamine = pyridoxal 5'-phosphate + L-glutamate + phosphate + 3 H2O + H(+). It functions in the pathway cofactor biosynthesis; pyridoxal 5'-phosphate biosynthesis. Functionally, catalyzes the formation of pyridoxal 5'-phosphate from ribose 5-phosphate (RBP), glyceraldehyde 3-phosphate (G3P) and ammonia. The ammonia is provided by PDX2. Can also use ribulose 5-phosphate and dihydroxyacetone phosphate as substrates, resulting from enzyme-catalyzed isomerization of RBP and G3P, respectively. Also plays an indirect role in resistance to singlet oxygen-generating photosensitizers. The protein is Probable pyridoxal 5'-phosphate synthase subunit PDX1 (PDX1) of Ginkgo biloba (Ginkgo).